Here is an 840-residue protein sequence, read N- to C-terminus: Cancer-associated gene 1 protein homolog (840 aa).

A coiled-coil region spans residues 303-559 (MALNEILKKL…HVARSEEQNY (257 aa)). Residues 800 to 840 (EDLIRKPREKARKPRSKSLENHPKSMTMMPAVFKENRNDLD) form a disordered region. Residues 806 to 815 (PREKARKPRS) are compositionally biased toward basic residues.

In Macaca fascicularis (Crab-eating macaque), this protein is Cancer-associated gene 1 protein homolog (CAGE1).